A 538-amino-acid polypeptide reads, in one-letter code: Putative cysteine ligase BshC (538 aa).

Residues 460 to 484 (KINEQIELLERMLKRNVEKKHEVEL) are a coiled coil.

Belongs to the BshC family.

Involved in bacillithiol (BSH) biosynthesis. May catalyze the last step of the pathway, the addition of cysteine to glucosamine malate (GlcN-Mal) to generate BSH. This is Putative cysteine ligase BshC from Bacillus cereus (strain ATCC 10987 / NRS 248).